A 468-amino-acid chain; its full sequence is ATP synthase subunit beta (468 aa).

ATP is bound at residue 155 to 162; that stretch reads GGAGVGKT.

Belongs to the ATPase alpha/beta chains family. As to quaternary structure, F-type ATPases have 2 components, CF(1) - the catalytic core - and CF(0) - the membrane proton channel. CF(1) has five subunits: alpha(3), beta(3), gamma(1), delta(1), epsilon(1). CF(0) has three main subunits: a(1), b(2) and c(9-12). The alpha and beta chains form an alternating ring which encloses part of the gamma chain. CF(1) is attached to CF(0) by a central stalk formed by the gamma and epsilon chains, while a peripheral stalk is formed by the delta and b chains.

The protein localises to the cell membrane. The catalysed reaction is ATP + H2O + 4 H(+)(in) = ADP + phosphate + 5 H(+)(out). Its function is as follows. Produces ATP from ADP in the presence of a proton gradient across the membrane. The catalytic sites are hosted primarily by the beta subunits. This is ATP synthase subunit beta from Streptococcus pyogenes serotype M1.